The sequence spans 86 residues: Large ribosomal subunit protein uL23 (86 aa).

The protein belongs to the universal ribosomal protein uL23 family. In terms of assembly, part of the 50S ribosomal subunit. Contacts protein L29.

Binds to 23S rRNA. One of the proteins that surrounds the polypeptide exit tunnel on the outside of the ribosome. In Methanococcus maripaludis (strain DSM 14266 / JCM 13030 / NBRC 101832 / S2 / LL), this protein is Large ribosomal subunit protein uL23.